The primary structure comprises 194 residues: Mitochondrial inner membrane protease ATP23 (194 aa).

Positions Met-1 to Gly-20 are disordered. His-96 is a Zn(2+) binding site. Glu-97 is an active-site residue. Residue His-100 coordinates Zn(2+).

This sequence belongs to the peptidase M76 family.

It is found in the mitochondrion inner membrane. Functionally, has a dual role in the assembly of mitochondrial ATPase. Acts as a protease that removes the N-terminal 10 residues of mitochondrial ATPase CF(0) subunit 6 (ATP6) at the intermembrane space side. Also involved in the correct assembly of the membrane-embedded ATPase CF(0) particle, probably mediating association of ATP6 with the subunit 9 ring. The polypeptide is Mitochondrial inner membrane protease ATP23 (Arabidopsis thaliana (Mouse-ear cress)).